Consider the following 170-residue polypeptide: Universal stress protein MJ0531 (170 aa).

The protein belongs to the universal stress protein A family.

The sequence is that of Universal stress protein MJ0531 from Methanocaldococcus jannaschii (strain ATCC 43067 / DSM 2661 / JAL-1 / JCM 10045 / NBRC 100440) (Methanococcus jannaschii).